A 408-amino-acid chain; its full sequence is MEGESTTAVISGFVFGALTFHHLNSGSDTEGFLLGDVMGEAKNSITDSQMDDVEVLYTIDIQKHVPCYQLSRFYNALGDLNIPELKKLLAGQKKSQNVIGWYKFRHNTEQIMTFRERLLHKNLQEHFSNSGLVFLLLTSNPATETKSTHRLEYALHKPQDGFFHKVPLVISNLGMSDQQGYKTLCGSCVSVGLNTAIKKHRLEFFNEDGALAEVNRISDMHMTLQEELKKTCSQLVESENSVEQLLEAVNDLKKQIAEKKLLMEEKGNKVSEDTEENVLLCEAFRRFFPQSALLQSCRLSLGGRQIPHSCSVSHNSSDVNELTLMVKQYDFPEAHRRQAGKRKAHSKQLGKTSTKKSRLPPFQRPQSDNSDSESSDSEKLLCTSGTETDGDIVQSLNVEVSRSKSPTF.

Residues 7 to 155 form the MPN domain; that stretch reads TAVISGFVFG…KSTHRLEYAL (149 aa). The stretch at 210–272 forms a coiled coil; sequence ALAEVNRISD…MEEKGNKVSE (63 aa). Residues 335 to 408 form a disordered region; the sequence is HRRQAGKRKA…EVSRSKSPTF (74 aa). Residues 337-358 are compositionally biased toward basic residues; the sequence is RQAGKRKAHSKQLGKTSTKKSR. A compositionally biased stretch (polar residues) spans 394–408; the sequence is QSLNVEVSRSKSPTF. Phosphoserine is present on S405. The short motif at 405–408 is the pSXXF motif element; the sequence is SPTF.

It belongs to the FAM175 family. Abraxas subfamily. In terms of assembly, component of the BRCA1-A complex. Component of the BRISC complex. Homodimer. Interacts directly (when phosphorylated at Ser-405) with brca1. The phosphorylated homodimer can interact directly with two brca1 chains, giving rise to a heterotetramer. Phosphorylation of Ser-405 of the pSXXF motif by ATM or ATR constitutes a specific recognition motif for the BRCT domain of BRCA1.

It is found in the nucleus. Functionally, involved in DNA damage response and double-strand break (DSB) repair. Component of the BRCA1-A complex, acting as a central scaffold protein that assembles the various components of the complex and mediates the recruitment of brca1. The BRCA1-A complex specifically recognizes 'Lys-63'-linked ubiquitinated histones H2A and H2AX at DNA lesion sites, leading to target the brca1-bard1 heterodimer to sites of DNA damage at DSBs. This complex also possesses deubiquitinase activity that specifically removes 'Lys-63'-linked ubiquitin on histones H2A and H2AX. This is BRCA1-A complex subunit Abraxas 1 from Xenopus laevis (African clawed frog).